Reading from the N-terminus, the 156-residue chain is Ribosome maturation factor RimP (156 aa).

It belongs to the RimP family.

It localises to the cytoplasm. Required for maturation of 30S ribosomal subunits. This Exiguobacterium sp. (strain ATCC BAA-1283 / AT1b) protein is Ribosome maturation factor RimP.